The sequence spans 188 residues: uncharacterized protein (188 aa).

Residues 121-139 (IWLYGGASLITTFINLGLV) traverse the membrane as a helical segment.

The protein to B.subtilis YwjB.

The protein resides in the membrane. This is an uncharacterized protein from Bacillus subtilis (strain 168).